The chain runs to 342 residues: uncharacterized protein (342 aa).

Belongs to the cycloisomerase 2 family.

This is an uncharacterized protein from Staphylococcus aureus (strain N315).